Reading from the N-terminus, the 129-residue chain is Ribosome-binding factor A (129 aa).

Belongs to the RbfA family. In terms of assembly, monomer. Binds 30S ribosomal subunits, but not 50S ribosomal subunits or 70S ribosomes.

Its subcellular location is the cytoplasm. Its function is as follows. One of several proteins that assist in the late maturation steps of the functional core of the 30S ribosomal subunit. Associates with free 30S ribosomal subunits (but not with 30S subunits that are part of 70S ribosomes or polysomes). Required for efficient processing of 16S rRNA. May interact with the 5'-terminal helix region of 16S rRNA. This is Ribosome-binding factor A from Actinobacillus succinogenes (strain ATCC 55618 / DSM 22257 / CCUG 43843 / 130Z).